The following is a 315-amino-acid chain: DNA-directed RNA polymerase subunit alpha (315 aa).

The interval 1–228 (MLEIEKPKIE…EHLRLFIGLT (228 aa)) is alpha N-terminal domain (alpha-NTD). The tract at residues 245 to 315 (KDKILEMTIE…LGLGFRKADD (71 aa)) is alpha C-terminal domain (alpha-CTD).

It belongs to the RNA polymerase alpha chain family. Homodimer. The RNAP catalytic core consists of 2 alpha, 1 beta, 1 beta' and 1 omega subunit. When a sigma factor is associated with the core the holoenzyme is formed, which can initiate transcription.

The catalysed reaction is RNA(n) + a ribonucleoside 5'-triphosphate = RNA(n+1) + diphosphate. Functionally, DNA-dependent RNA polymerase catalyzes the transcription of DNA into RNA using the four ribonucleoside triphosphates as substrates. The protein is DNA-directed RNA polymerase subunit alpha of Desulfitobacterium hafniense (strain DSM 10664 / DCB-2).